A 666-amino-acid chain; its full sequence is Long chain acyl-CoA synthetase 5 (666 aa).

228-239 is a binding site for ATP; sequence IMYTSGTTGDPK. The fatty acid-binding stretch occupies residues 495 to 519; sequence DGWLHTGDVGEWQPNGSMKIIDRKK.

This sequence belongs to the ATP-dependent AMP-binding enzyme family. Mg(2+) serves as cofactor.

It catalyses the reaction a long-chain fatty acid + ATP + CoA = a long-chain fatty acyl-CoA + AMP + diphosphate. Its pathway is lipid metabolism; fatty acid metabolism. Its function is as follows. Activation of long-chain fatty acids for both synthesis of cellular lipids, and degradation via beta-oxidation. Preferentially uses palmitate, palmitoleate, oleate and linoleate. This Arabidopsis thaliana (Mouse-ear cress) protein is Long chain acyl-CoA synthetase 5 (LACS5).